Here is a 97-residue protein sequence, read N- to C-terminus: YcgL domain-containing protein PP_4590 (97 aa).

The region spanning 3 to 87 is the YcgL domain; sequence RICSIYKSPR…LEDEYIEHLP (85 aa).

In Pseudomonas putida (strain ATCC 47054 / DSM 6125 / CFBP 8728 / NCIMB 11950 / KT2440), this protein is YcgL domain-containing protein PP_4590.